The following is a 212-amino-acid chain: Hydroxyacylglutathione hydrolase GloC (212 aa).

Zn(2+) is bound by residues histidine 55, histidine 57, aspartate 59, histidine 60, histidine 132, aspartate 151, and histidine 192.

The protein belongs to the metallo-beta-lactamase superfamily. Glyoxalase II family. Zn(2+) serves as cofactor.

The enzyme catalyses an S-(2-hydroxyacyl)glutathione + H2O = a 2-hydroxy carboxylate + glutathione + H(+). It catalyses the reaction (R)-S-lactoylglutathione + H2O = (R)-lactate + glutathione + H(+). Its pathway is secondary metabolite metabolism; methylglyoxal degradation; (R)-lactate from methylglyoxal: step 2/2. Its function is as follows. Type II glyoxalase, isozyme of GloB, that hydrolyzes (R)-S-lactoylglutathione to (R)-lactate and glutathione. Plays a role in methylglyoxal (MG) detoxification. The sequence is that of Hydroxyacylglutathione hydrolase GloC from Haemophilus influenzae (strain ATCC 51907 / DSM 11121 / KW20 / Rd).